Reading from the N-terminus, the 302-residue chain is Probable histone acetyltransferase Rv0428c (302 aa).

It carries out the reaction L-lysyl-[histone] + acetyl-CoA = N(6)-acetyl-L-lysyl-[histone] + CoA + H(+). Shows histone acetyl transferase (HAT) activity with recombinant eukaryotic H3 histone expressed in bacteria as substrate and acetyl-CoA as donor. May be involved in survival under stress conditions. In Mycobacterium tuberculosis (strain ATCC 25618 / H37Rv), this protein is Probable histone acetyltransferase Rv0428c.